Here is a 331-residue protein sequence, read N- to C-terminus: Tryptophan--tRNA ligase (331 aa).

ATP is bound by residues 10–12 (QPS) and 18–19 (GN). The short motif at 11-19 (PSGQLTLGN) is the 'HIGH' region element. Asp-133 contributes to the L-tryptophan binding site. ATP contacts are provided by residues 145–147 (GED), Val-184, and 193–197 (KMSKS). A 'KMSKS' region motif is present at residues 193-197 (KMSKS).

This sequence belongs to the class-I aminoacyl-tRNA synthetase family. As to quaternary structure, homodimer.

The protein resides in the cytoplasm. It carries out the reaction tRNA(Trp) + L-tryptophan + ATP = L-tryptophyl-tRNA(Trp) + AMP + diphosphate + H(+). Its function is as follows. Catalyzes the attachment of tryptophan to tRNA(Trp). The polypeptide is Tryptophan--tRNA ligase (Listeria monocytogenes serovar 1/2a (strain ATCC BAA-679 / EGD-e)).